The primary structure comprises 374 residues: METGCWVLGGEFEDSVFEQKPERQPEPPSSYGAKLCEPQWFYEETESSNDIEVLTLKKFRGDLAYRRQEYEKALQEYSSISKQLPSTNFAMKRDVQEGQARCLAHLGRHEEALEIAVDLESKATNTEHLTSALSLHLAIFSRRQSLEKTILYLQKLISLHPLNPWSWCKLAEAYLSPGPDLPALGESPQGQKSSASSDKAVRASSVHSGTGCLPFPAPSPDSAVFSVEASGCDTQQDMQNCLAARRAAAQTEAQRKACAALIRARLLLQLAQSQQTSFALEKNLRTQQEIAQKVKEFSFREDTLLLMEEAMGEDIVPERIKEELHPEVQCVGPAALTASVAASSKEFEDKWFRKVRDHFSPLEKQSHVDIQIMA.

Positions Pro-182–Val-201 are disordered. Over residues Pro-188–Ser-197 the composition is skewed to polar residues.

This is an uncharacterized protein from Rattus norvegicus (Rat).